A 382-amino-acid chain; its full sequence is Lipid-A-disaccharide synthase (382 aa).

This sequence belongs to the LpxB family.

It carries out the reaction 2-N,3-O-bis[(3R)-3-hydroxytetradecanoyl]-alpha-D-glucosaminyl 1-phosphate + UDP-2-N,3-O-bis[(3R)-3-hydroxytetradecanoyl]-alpha-D-glucosamine = lipid A disaccharide (E. coli) + UDP + H(+). The enzyme catalyses a lipid X + a UDP-2-N,3-O-bis[(3R)-3-hydroxyacyl]-alpha-D-glucosamine = a lipid A disaccharide + UDP + H(+). It functions in the pathway glycolipid biosynthesis; lipid IV(A) biosynthesis; lipid IV(A) from (3R)-3-hydroxytetradecanoyl-[acyl-carrier-protein] and UDP-N-acetyl-alpha-D-glucosamine: step 5/6. Its function is as follows. Condensation of UDP-2,3-diacylglucosamine and 2,3-diacylglucosamine-1-phosphate to form lipid A disaccharide, a precursor of lipid A, a phosphorylated glycolipid that anchors the lipopolysaccharide to the outer membrane of the cell. The polypeptide is Lipid-A-disaccharide synthase (Salmonella paratyphi A (strain AKU_12601)).